We begin with the raw amino-acid sequence, 434 residues long: Enolase (434 aa).

Residue Gln163 participates in (2R)-2-phosphoglycerate binding. The Proton donor role is filled by Glu205. Mg(2+) is bound by residues Asp242, Glu291, and Asp318. (2R)-2-phosphoglycerate-binding residues include Lys343, Arg372, Ser373, and Lys394. The active-site Proton acceptor is Lys343.

This sequence belongs to the enolase family. Mg(2+) serves as cofactor.

The protein resides in the cytoplasm. It is found in the secreted. It localises to the cell surface. The catalysed reaction is (2R)-2-phosphoglycerate = phosphoenolpyruvate + H2O. It functions in the pathway carbohydrate degradation; glycolysis; pyruvate from D-glyceraldehyde 3-phosphate: step 4/5. Functionally, catalyzes the reversible conversion of 2-phosphoglycerate (2-PG) into phosphoenolpyruvate (PEP). It is essential for the degradation of carbohydrates via glycolysis. The protein is Enolase of Streptococcus gordonii (strain Challis / ATCC 35105 / BCRC 15272 / CH1 / DL1 / V288).